Consider the following 222-residue polypeptide: Small ribosomal subunit protein uS7m (222 aa).

This sequence belongs to the universal ribosomal protein uS7 family. Part of the small ribosomal subunit.

The protein localises to the mitochondrion. Functionally, one of the primary rRNA binding proteins, it binds directly to 18S rRNA where it nucleates assembly of the head domain of the small subunit. The polypeptide is Small ribosomal subunit protein uS7m (RPS7) (Prototheca wickerhamii).